Consider the following 81-residue polypeptide: Penaeidin-3j (81 aa).

The first 19 residues, 1–19 (MRLVVCLVFLASFALVCQG), serve as a signal peptide directing secretion. A Pyrrolidone carboxylic acid modification is found at glutamine 20. Disulfide bonds link cysteine 50–cysteine 65, cysteine 54–cysteine 72, and cysteine 66–cysteine 73. The residue at position 80 (serine 80) is a Serine amide.

The protein belongs to the penaeidin family.

Its subcellular location is the cytoplasmic granule. In terms of biological role, antibacterial and antifungal activity. Presents chitin-binding activity. The protein is Penaeidin-3j of Penaeus vannamei (Whiteleg shrimp).